We begin with the raw amino-acid sequence, 34 residues long: Photosystem II reaction center protein M (34 aa).

A helical membrane pass occupies residues isoleucine 5–leucine 25.

Belongs to the PsbM family. PSII is composed of 1 copy each of membrane proteins PsbA, PsbB, PsbC, PsbD, PsbE, PsbF, PsbH, PsbI, PsbJ, PsbK, PsbL, PsbM, PsbT, PsbX, PsbY, PsbZ, Psb30/Ycf12, at least 3 peripheral proteins of the oxygen-evolving complex and a large number of cofactors. It forms dimeric complexes.

Its subcellular location is the plastid. The protein localises to the chloroplast thylakoid membrane. In terms of biological role, one of the components of the core complex of photosystem II (PSII). PSII is a light-driven water:plastoquinone oxidoreductase that uses light energy to abstract electrons from H(2)O, generating O(2) and a proton gradient subsequently used for ATP formation. It consists of a core antenna complex that captures photons, and an electron transfer chain that converts photonic excitation into a charge separation. This subunit is found at the monomer-monomer interface. In Pleurastrum terricola (Filamentous green alga), this protein is Photosystem II reaction center protein M.